Consider the following 340-residue polypeptide: PI-PLC X domain-containing protein 2 (340 aa).

Residues 42–215 (HLHNVPLSNL…KYQVLIFYHC (174 aa)) form the PI-PLC X-box domain. Active-site residues include H57 and H132.

Expressed at highest levels in brain, followed by stomach and small intestine. Detected at low levels in kidney, ey, thymus and slkeletal muscle.

Its subcellular location is the nucleus. The enzyme catalyses a 1,2-diacyl-sn-glycero-3-phospho-(1D-myo-inositol) + H2O = 1D-myo-inositol 1-phosphate + a 1,2-diacyl-sn-glycerol + H(+). Catalyzes the hydrolysis of inositol from phosphatidylinositol (1,2-diacyl-sn-glycero-3-phospho-(1D-myo-inositol), PI). Could also hydrolyze various multi-phosphorylated derivatives of PI, such as phosphatidylinositol-4,5 bisphosphate (PIP2), releasing inositol-1,4,5-trisphosphate (IP3) and the protein kinase C activator diacylglycerol (DAG), therefore mediating cell signaling. This is PI-PLC X domain-containing protein 2 (Plcxd2) from Mus musculus (Mouse).